Consider the following 376-residue polypeptide: Putative peptide import ATP-binding protein BMEII0205 (376 aa).

The interval 1-25 is disordered; the sequence is MPLRPALHLRTGKLRQTPTHNEPDG. Residues 64–314 enclose the ABC transporter domain; sequence VRTDDLVRDF…PLHPYSRALL (251 aa). Residue 106–113 participates in ATP binding; it reads GESGSGKS.

This sequence belongs to the ABC transporter superfamily. In terms of assembly, the complex is composed of two ATP-binding proteins (BMEII0205 and BMEII0206), two transmembrane proteins (BMEII0207/BMEII0208 and BMEII0209) and a solute-binding protein (BMEII0210).

Its subcellular location is the cell inner membrane. In terms of biological role, probably part of an ABC transporter complex that could be involved in peptide import. Probably responsible for energy coupling to the transport system. In Brucella melitensis biotype 1 (strain ATCC 23456 / CCUG 17765 / NCTC 10094 / 16M), this protein is Putative peptide import ATP-binding protein BMEII0205.